The primary structure comprises 223 residues: Urease accessory protein UreF (223 aa).

The protein belongs to the UreF family. UreD, UreF and UreG form a complex that acts as a GTP-hydrolysis-dependent molecular chaperone, activating the urease apoprotein by helping to assemble the nickel containing metallocenter of UreC. The UreE protein probably delivers the nickel.

It localises to the cytoplasm. In terms of biological role, required for maturation of urease via the functional incorporation of the urease nickel metallocenter. This chain is Urease accessory protein UreF, found in Mesorhizobium japonicum (strain LMG 29417 / CECT 9101 / MAFF 303099) (Mesorhizobium loti (strain MAFF 303099)).